The following is a 348-amino-acid chain: Signal recognition particle receptor FtsY (348 aa).

GTP-binding positions include 143-150 (GVNGVGKT), 225-229 (DTSGR), and 289-292 (TKMD).

The protein belongs to the GTP-binding SRP family. FtsY subfamily. As to quaternary structure, part of the signal recognition particle protein translocation system, which is composed of SRP and FtsY.

It is found in the cell membrane. The protein localises to the cytoplasm. It catalyses the reaction GTP + H2O = GDP + phosphate + H(+). Its function is as follows. Involved in targeting and insertion of nascent membrane proteins into the cytoplasmic membrane. Acts as a receptor for the complex formed by the signal recognition particle (SRP) and the ribosome-nascent chain (RNC). The sequence is that of Signal recognition particle receptor FtsY from Mycoplasma pneumoniae (strain ATCC 29342 / M129 / Subtype 1) (Mycoplasmoides pneumoniae).